Here is a 436-residue protein sequence, read N- to C-terminus: MQVSVETTEGLGRRMTVQVPAERVENEVERRLKDLSGRVKMDGFRPGKVPVKVVRKQYGAQVRSEVLSEVVQQTYSEALEQESLRPAGNPHIEPKRTGEGEDLEYEASFDVLPEIEVAGLDQIQVERPQVEITDADLDNVLERLRKQHADYQEVDRAAQDEDRVVIDFHGTIDGEAFTGNSAEDAPLILGAGQLPEAFEQGLQGAKAGQELTVEHKFPDELAEPSIAGKTAVFQVTVKRVEEPQLPELDDDFAARLGIQEGGVEALREAVRGNLERERHQAVRQRLKRQVLDQLADQNELELPKSLIDGEIQALRQQSGASAEGELPESERSAYEDVASRRVKLGLLVNELVRSQGIQLDRERMMTQLREMAANSGQDPSEALQQIAQDRQMMQSLEASVIEEQVVDWLLEQVQTEDKTLSFDELMNSEDGDQASA.

Disordered stretches follow at residues 1-26 and 81-100; these read MQVS…RVEN and QESL…TGEG. Residues 161-246 form the PPIase FKBP-type domain; that stretch reads EDRVVIDFHG…VKRVEEPQLP (86 aa).

The protein belongs to the FKBP-type PPIase family. Tig subfamily.

Its subcellular location is the cytoplasm. The catalysed reaction is [protein]-peptidylproline (omega=180) = [protein]-peptidylproline (omega=0). Involved in protein export. Acts as a chaperone by maintaining the newly synthesized protein in an open conformation. Functions as a peptidyl-prolyl cis-trans isomerase. The protein is Trigger factor of Halorhodospira halophila (strain DSM 244 / SL1) (Ectothiorhodospira halophila (strain DSM 244 / SL1)).